Here is a 145-residue protein sequence, read N- to C-terminus: Putative type I specificity subunit S.MpnORF289P C-terminus (145 aa).

It belongs to the type-I restriction system S methylase family. The methyltransferase is composed of M and S polypeptides.

Functionally, the C-terminal section of a specificity (S) subunit of a type I methyltransferase (MTase); this subunit dictates DNA sequence specificity. The single R subunit has multiple frameshifts and is probably not expressed. This chain is Putative type I specificity subunit S.MpnORF289P C-terminus, found in Mycoplasma pneumoniae (strain ATCC 29342 / M129 / Subtype 1) (Mycoplasmoides pneumoniae).